Here is a 338-residue protein sequence, read N- to C-terminus: Probable tRNA pseudouridine synthase B (338 aa).

The Nucleophile role is filled by aspartate 82. Positions 250–325 (LPKVWIRDSA…IAVDVDKVFM (76 aa)) constitute a PUA domain.

The protein belongs to the pseudouridine synthase TruB family. Type 2 subfamily.

It carries out the reaction uridine(55) in tRNA = pseudouridine(55) in tRNA. Its function is as follows. Could be responsible for synthesis of pseudouridine from uracil-55 in the psi GC loop of transfer RNAs. The sequence is that of Probable tRNA pseudouridine synthase B from Thermococcus kodakarensis (strain ATCC BAA-918 / JCM 12380 / KOD1) (Pyrococcus kodakaraensis (strain KOD1)).